A 364-amino-acid chain; its full sequence is NAC transcription factor 56 (364 aa).

The interval 1-23 is disordered; sequence MESTDSSGGPPPPQPNLPPGFRF. The span at 9-18 shows a compositional bias: pro residues; the sequence is GPPPPQPNLP. In terms of domain architecture, NAC spans 17 to 178; it reads LPPGFRFHPT…DWVLCRIYKK (162 aa). Residues 116-184 mediate DNA binding; it reads VGVKKALVFY…IYKKNNASRH (69 aa).

Stamen specific, in anthers from stage 8. Expressed in the outer integument, but seems not expressed in the embryo at the torpedo stage.

The protein localises to the nucleus. In terms of biological role, transcription factor of the NAC family. Together with NAC018/NARS2, regulates embryogenesis by regulating the development and degeneration of ovule integuments, a process required for intertissue communication between the embryo and the maternal integument. This chain is NAC transcription factor 56, found in Arabidopsis thaliana (Mouse-ear cress).